We begin with the raw amino-acid sequence, 419 residues long: Gamma-glutamyl phosphate reductase (419 aa).

It belongs to the gamma-glutamyl phosphate reductase family.

It localises to the cytoplasm. The catalysed reaction is L-glutamate 5-semialdehyde + phosphate + NADP(+) = L-glutamyl 5-phosphate + NADPH + H(+). The protein operates within amino-acid biosynthesis; L-proline biosynthesis; L-glutamate 5-semialdehyde from L-glutamate: step 2/2. Functionally, catalyzes the NADPH-dependent reduction of L-glutamate 5-phosphate into L-glutamate 5-semialdehyde and phosphate. The product spontaneously undergoes cyclization to form 1-pyrroline-5-carboxylate. The sequence is that of Gamma-glutamyl phosphate reductase from Oleidesulfovibrio alaskensis (strain ATCC BAA-1058 / DSM 17464 / G20) (Desulfovibrio alaskensis).